The sequence spans 167 residues: Peptide deformylase (167 aa).

2 residues coordinate Fe cation: Cys-91 and His-133. Glu-134 is a catalytic residue. His-137 serves as a coordination point for Fe cation.

The protein belongs to the polypeptide deformylase family. Fe(2+) is required as a cofactor.

The catalysed reaction is N-terminal N-formyl-L-methionyl-[peptide] + H2O = N-terminal L-methionyl-[peptide] + formate. Its function is as follows. Removes the formyl group from the N-terminal Met of newly synthesized proteins. Requires at least a dipeptide for an efficient rate of reaction. N-terminal L-methionine is a prerequisite for activity but the enzyme has broad specificity at other positions. In Nitrosococcus oceani (strain ATCC 19707 / BCRC 17464 / JCM 30415 / NCIMB 11848 / C-107), this protein is Peptide deformylase.